A 1102-amino-acid chain; its full sequence is DNA-directed RNA polymerase subunit beta (1102 aa).

Positions 1076 to 1102 (IDSQRRAPNRPTYESLHTEEDLEEEEV) are disordered.

It belongs to the RNA polymerase beta chain family. As to quaternary structure, in cyanobacteria the RNAP catalytic core is composed of 2 alpha, 1 beta, 1 beta', 1 gamma and 1 omega subunit. When a sigma factor is associated with the core the holoenzyme is formed, which can initiate transcription.

It catalyses the reaction RNA(n) + a ribonucleoside 5'-triphosphate = RNA(n+1) + diphosphate. Functionally, DNA-dependent RNA polymerase catalyzes the transcription of DNA into RNA using the four ribonucleoside triphosphates as substrates. The polypeptide is DNA-directed RNA polymerase subunit beta (Synechocystis sp. (strain ATCC 27184 / PCC 6803 / Kazusa)).